A 129-amino-acid polypeptide reads, in one-letter code: Small ribosomal subunit protein uS11 (129 aa).

This sequence belongs to the universal ribosomal protein uS11 family. As to quaternary structure, part of the 30S ribosomal subunit. Interacts with proteins S7 and S18. Binds to IF-3.

In terms of biological role, located on the platform of the 30S subunit, it bridges several disparate RNA helices of the 16S rRNA. Forms part of the Shine-Dalgarno cleft in the 70S ribosome. The chain is Small ribosomal subunit protein uS11 from Bradyrhizobium sp. (strain ORS 278).